The chain runs to 437 residues: Protein translocase subunit SecY (437 aa).

10 helical membrane-spanning segments follow: residues 19–39, 68–88, 121–141, 156–176, 188–208, 218–238, 274–294, 317–337, 378–398, and 400–420; these read LFTL…APGV, LLQI…SIIL, VALA…GALF, IFTT…VMWL, GMSI…LWAI, WIEF…VVFV, GVIP…IVQF, YIAT…AISF, SLYL…FGGA, and QNFP…LETV.

Belongs to the SecY/SEC61-alpha family. Component of the Sec protein translocase complex. Heterotrimer consisting of SecY, SecE and SecG subunits. The heterotrimers can form oligomers, although 1 heterotrimer is thought to be able to translocate proteins. Interacts with the ribosome. Interacts with SecDF, and other proteins may be involved. Interacts with SecA.

It localises to the cell membrane. The central subunit of the protein translocation channel SecYEG. Consists of two halves formed by TMs 1-5 and 6-10. These two domains form a lateral gate at the front which open onto the bilayer between TMs 2 and 7, and are clamped together by SecE at the back. The channel is closed by both a pore ring composed of hydrophobic SecY resides and a short helix (helix 2A) on the extracellular side of the membrane which forms a plug. The plug probably moves laterally to allow the channel to open. The ring and the pore may move independently. The protein is Protein translocase subunit SecY of Streptomyces griseus.